A 106-amino-acid chain; its full sequence is Large ribosomal subunit protein eL42 (106 aa).

The disordered stretch occupies residues 26–53 (YKKGKDSLYAQGKRRYDRKQSGYGGQTK).

It belongs to the eukaryotic ribosomal protein eL42 family. As to quaternary structure, component of the large ribosomal subunit.

It is found in the cytoplasm. In terms of biological role, component of the large ribosomal subunit. The ribosome is a large ribonucleoprotein complex responsible for the synthesis of proteins in the cell. This chain is Large ribosomal subunit protein eL42 (rpl36a), found in Danio rerio (Zebrafish).